A 355-amino-acid chain; its full sequence is C-C chemokine receptor type 8 (355 aa).

The Extracellular segment spans residues 1–35; it reads MDYTLDLSVTTVTDYYYPDIFSSPCDAELIQTNGK. The helical transmembrane segment at 36–63 threads the bilayer; sequence LLLAVFYCLLFVFSLLGNSLVILVLVVC. Over 64-73 the chain is Cytoplasmic; it reads KKLRSITDVY. The chain crosses the membrane as a helical span at residues 74 to 93; the sequence is LLNLALSDLLFVFSFPFQTY. Residues 94–107 are Extracellular-facing; it reads YLLDQWVFGTVMCK. Cysteine 106 and cysteine 183 are disulfide-bonded. A helical transmembrane segment spans residues 108–129; sequence VVSGFYYIGFYSSMFFITLMSV. At 130 to 146 the chain is on the cytoplasmic side; the sequence is DRYLAVVHAVYALKVRT. A helical transmembrane segment spans residues 147–171; the sequence is IRMGTTLCLAVWLTAIMATIPLLVF. The Extracellular segment spans residues 172–202; that stretch reads YQVASEDGVLQCYSFYNQQTLKWKIFTNFKM. The helical transmembrane segment at 203–222 threads the bilayer; sequence NILGLLIPFTIFMFCYIKIL. Over 223 to 238 the chain is Cytoplasmic; the sequence is HQLKRCQNHNKTKAIR. A helical transmembrane segment spans residues 239 to 263; that stretch reads LVLIVVIASLLFWVPFNVVLFLTSL. The Extracellular segment spans residues 264–280; it reads HSMHILDGCSISQQLTY. A helical transmembrane segment spans residues 281–304; sequence ATHVTEIISFTHCCVNPVIYAFVG. Over 305–355 the chain is Cytoplasmic; sequence EKFKKHLSEIFQKSCSQIFNYLGRQMPRESCEKSSSCQQHSSRSSSVDYIL.

This sequence belongs to the G-protein coupled receptor 1 family.

It localises to the cell membrane. Functionally, receptor for the chemokine CCL1/SCYA1/I-309. May regulate monocyte chemotaxis and thymic cell line apoptosis. Alternative coreceptor with CD4 for HIV-1 infection. The protein is C-C chemokine receptor type 8 (CCR8) of Homo sapiens (Human).